The following is a 150-amino-acid chain: Interleukin-17A (150 aa).

The signal sequence occupies residues 1–17 (MCLMLLLLLNLEATVKA). Positions 54–75 (SSRRPSDYLNRSTSPWTLSRNE) are disordered. The span at 62–72 (LNRSTSPWTLS) shows a compositional bias: polar residues. A glycan (N-linked (GlcNAc...) asparagine) is linked at Asn63. Disulfide bonds link Cys89–Cys139 and Cys94–Cys141.

Belongs to the IL-17 family. Homodimer. Forms complexes with IL17RA and IL17RC receptors with 2:1 binding stoichiometry: two receptor chains for one interleukin molecule. IL17A homodimer preferentially drives the formation of IL17RA-IL17RC heterodimeric receptor complex. IL17A homodimer adopts an asymmetrical ternary structure with one IL17RA molecule, allowing for high affinity interactions of one IL17A monomer with one IL17RA molecule (via D1 and D2 domains), while disfavoring binding of a second IL17RA molecule on the other IL17A monomer. Heterodimer with IL17F. IL17A-IL17F forms complexes with IL17RA-IL17RC, but with lower affinity when compared to IL17A homodimer. IL17RA and IL17RC chains cannot distinguish between IL17A and IL17F molecules, potentially enabling the formation of topologically distinct complexes.

The protein localises to the secreted. In terms of biological role, effector cytokine of innate and adaptive immune system involved in antimicrobial host defense and maintenance of tissue integrity. Signals via IL17RA-IL17RC heterodimeric receptor complex, triggering homotypic interaction of IL17RA and IL17RC chains with TRAF3IP2 adapter. This leads to downstream TRAF6-mediated activation of NF-kappa-B and MAPkinase pathways ultimately resulting in transcriptional activation of cytokines, chemokines, antimicrobial peptides and matrix metalloproteinases, with potential strong immune inflammation. Plays an important role in connecting T cell-mediated adaptive immunity and acute inflammatory response to destroy extracellular bacteria and fungi. As a signature effector cytokine of T-helper 17 cells (Th17), primarily induces neutrophil activation and recruitment at infection and inflammatory sites. In airway epithelium, mediates neutrophil chemotaxis via induction of CXCL1 and CXCL5 chemokines. In secondary lymphoid organs, contributes to germinal center formation by regulating the chemotactic response of B cells to CXCL12 and CXCL13, enhancing retention of B cells within the germinal centers, B cell somatic hypermutation rate and selection toward plasma cells. Effector cytokine of a subset of gamma-delta T cells that functions as part of an inflammatory circuit downstream IL1B, TLR2 and IL23A-IL12B to promote neutrophil recruitment for efficient bacterial clearance. Effector cytokine of innate immune cells including invariant natural killer cell (iNKT) and group 3 innate lymphoid cells that mediate initial neutrophilic inflammation. Involved in the maintenance of the integrity of epithelial barriers during homeostasis and pathogen infection. Upon acute injury, has a direct role in epithelial barrier formation by regulating OCLN localization and tight junction biogenesis. As part of the mucosal immune response induced by commensal bacteria, enhances host's ability to resist pathogenic bacterial and fungal infections by promoting neutrophil recruitment and antimicrobial peptides release. In synergy with IL17F, mediates the production of antimicrobial beta-defensins DEFB1, DEFB103A, and DEFB104A by mucosal epithelial cells, limiting the entry of microbes through the epithelial barriers. Involved in antiviral host defense through various mechanisms. The polypeptide is Interleukin-17A (Il17a) (Rattus norvegicus (Rat)).